Reading from the N-terminus, the 226-residue chain is dITP/XTP pyrophosphatase (226 aa).

14–19 (TGNKDK) is a substrate binding site. Mg(2+) contacts are provided by glutamate 49 and aspartate 83. The active-site Proton acceptor is the aspartate 83. Residues threonine 84, 176-179 (FGYD), lysine 199, and 204-205 (HR) each bind substrate.

The protein belongs to the HAM1 NTPase family. As to quaternary structure, homodimer. Requires Mg(2+) as cofactor.

The catalysed reaction is XTP + H2O = XMP + diphosphate + H(+). The enzyme catalyses dITP + H2O = dIMP + diphosphate + H(+). It carries out the reaction ITP + H2O = IMP + diphosphate + H(+). Pyrophosphatase that catalyzes the hydrolysis of nucleoside triphosphates to their monophosphate derivatives, with a high preference for the non-canonical purine nucleotides XTP (xanthosine triphosphate), dITP (deoxyinosine triphosphate) and ITP. Seems to function as a house-cleaning enzyme that removes non-canonical purine nucleotides from the nucleotide pool, thus preventing their incorporation into DNA/RNA and avoiding chromosomal lesions. The polypeptide is dITP/XTP pyrophosphatase (Chlorobaculum tepidum (strain ATCC 49652 / DSM 12025 / NBRC 103806 / TLS) (Chlorobium tepidum)).